Consider the following 191-residue polypeptide: Thymidylate kinase (191 aa).

Residue 7–14 (GIDTCGKS) coordinates ATP.

This sequence belongs to the thymidylate kinase family.

It carries out the reaction dTMP + ATP = dTDP + ADP. Phosphorylation of dTMP to form dTDP in both de novo and salvage pathways of dTTP synthesis. This Sulfurovum sp. (strain NBC37-1) protein is Thymidylate kinase.